An 830-amino-acid chain; its full sequence is Envelope glycoprotein B (830 aa).

The signal sequence occupies residues 1–19 (MSKMRVLFLAVFLMNSVLM). Residues 20–688 (IYCDSDDYIR…GGVVSFLKNP (669 aa)) are Virion surface-facing. 4 cysteine pairs are disulfide-bonded: Cys41–Cys482, Cys58–Cys438, Cys131–Cys197, and Cys290–Cys337. The interval 98 to 104 (SYRDVGV) is involved in fusion and/or binding to host membrane. N-linked (GlcNAc...) asparagine; by host glycosylation occurs at Asn155. Residues 184-191 (GPLWLYST) are involved in fusion and/or binding to host membrane. N-linked (GlcNAc...) asparagine; by host glycosylation is found at Asn247, Asn286, Asn329, Asn361, and Asn486. A disulfide bridge links Cys510 with Cys548. 2 hydrophobic membrane proximal region regions span residues 634–686 (IEAK…SFLK) and 644–685 (SYVN…VSFL). Residues 689–709 (FGGGLMLILAIVVVVIIIVVF) traverse the membrane as a helical segment. The Intravirion segment spans residues 710–830 (VRQKHVLSKP…GYKSVNVEEA (121 aa)). The short motif at 822–825 (YKSV) is the Internalization motif element.

This sequence belongs to the herpesviridae glycoprotein B family. Homotrimer; disulfide-linked. Binds to heparan sulfate proteoglycans. Interacts with gH/gL heterodimer. Post-translationally, a proteolytic cleavage by host furin generates two subunits that remain linked by disulfide bonds.

The protein localises to the virion membrane. Its subcellular location is the host cell membrane. It localises to the host endosome membrane. The protein resides in the host Golgi apparatus membrane. Envelope glycoprotein that forms spikes at the surface of virion envelope. Essential for the initial attachment to heparan sulfate moieties of the host cell surface proteoglycans. Involved in fusion of viral and cellular membranes leading to virus entry into the host cell. Following initial binding to its host receptors, membrane fusion is mediated by the fusion machinery composed at least of gB and the heterodimer gH/gL. May be involved in the fusion between the virion envelope and the outer nuclear membrane during virion egress. The protein is Envelope glycoprotein B of Homo sapiens (Human).